The chain runs to 458 residues: tRNA-2-methylthio-N(6)-dimethylallyladenosine synthase (458 aa).

One can recognise an MTTase N-terminal domain in the interval 15–134 (KKVFIKTYGC…LPELLQQAQQ (120 aa)). [4Fe-4S] cluster is bound by residues Cys-24, Cys-60, Cys-97, Cys-175, Cys-179, and Cys-182. In terms of domain architecture, Radical SAM core spans 161–393 (QKRGVSAFLT…QALLLDQQHR (233 aa)). The TRAM domain occupies 396-457 (RSKIGQTTDV…SNSFVGEKAN (62 aa)).

The protein belongs to the methylthiotransferase family. MiaB subfamily. In terms of assembly, monomer. It depends on [4Fe-4S] cluster as a cofactor.

It is found in the cytoplasm. It catalyses the reaction N(6)-dimethylallyladenosine(37) in tRNA + (sulfur carrier)-SH + AH2 + 2 S-adenosyl-L-methionine = 2-methylsulfanyl-N(6)-dimethylallyladenosine(37) in tRNA + (sulfur carrier)-H + 5'-deoxyadenosine + L-methionine + A + S-adenosyl-L-homocysteine + 2 H(+). Catalyzes the methylthiolation of N6-(dimethylallyl)adenosine (i(6)A), leading to the formation of 2-methylthio-N6-(dimethylallyl)adenosine (ms(2)i(6)A) at position 37 in tRNAs that read codons beginning with uridine. The chain is tRNA-2-methylthio-N(6)-dimethylallyladenosine synthase from Bartonella bacilliformis (strain ATCC 35685 / KC583 / Herrer 020/F12,63).